Reading from the N-terminus, the 382-residue chain is Succinate--CoA ligase [ADP-forming] subunit beta (382 aa).

Residues 9 to 240 enclose the ATP-grasp domain; the sequence is KELFSKYGVK…PRDVSEFEMY (232 aa). Residues K45, 52 to 54, V94, and E99 each bind ATP; that span reads GRG. The Mg(2+) site is built by N193 and D207. Residues N260 and 317–319 contribute to the substrate site; that span reads GIT.

Belongs to the succinate/malate CoA ligase beta subunit family. In terms of assembly, heterotetramer of two alpha and two beta subunits. Mg(2+) is required as a cofactor.

The enzyme catalyses succinate + ATP + CoA = succinyl-CoA + ADP + phosphate. It carries out the reaction GTP + succinate + CoA = succinyl-CoA + GDP + phosphate. Its pathway is carbohydrate metabolism; tricarboxylic acid cycle; succinate from succinyl-CoA (ligase route): step 1/1. Its function is as follows. Succinyl-CoA synthetase functions in the citric acid cycle (TCA), coupling the hydrolysis of succinyl-CoA to the synthesis of either ATP or GTP and thus represents the only step of substrate-level phosphorylation in the TCA. The beta subunit provides nucleotide specificity of the enzyme and binds the substrate succinate, while the binding sites for coenzyme A and phosphate are found in the alpha subunit. The sequence is that of Succinate--CoA ligase [ADP-forming] subunit beta from Pyrobaculum arsenaticum (strain DSM 13514 / JCM 11321 / PZ6).